A 419-amino-acid polypeptide reads, in one-letter code: Sphingomyelin phosphodiesterase 2 (419 aa).

Mg(2+) is bound at residue glutamate 49. The active-site Proton acceptor is histidine 272. The next 2 membrane-spanning stretches (helical) occupy residues 326–346 (FSGY…VLAA) and 354–374 (AIIL…VYLF).

The protein belongs to the neutral sphingomyelinase family. Mg(2+) serves as cofactor. Although widely expressed in all tissues examined, except the spleen, high enzymatic activity occurs only in the brain.

The protein localises to the cell membrane. It carries out the reaction a sphingomyelin + H2O = phosphocholine + an N-acylsphing-4-enine + H(+). It catalyses the reaction an N-(acyl)-sphingosylphosphocholine + H2O = an N-acyl-sphingoid base + phosphocholine + H(+). The catalysed reaction is 1-O-octadecyl-sn-glycero-3-phosphocholine + H2O = 1-O-octadecyl-sn-glycerol + phosphocholine + H(+). The enzyme catalyses 1-hexadecanoyl-sn-glycero-3-phosphocholine + H2O = 1-hexadecanoyl-sn-glycerol + phosphocholine + H(+). It carries out the reaction a sphingosylphosphocholine + H2O = a sphingoid base + phosphocholine + H(+). It catalyses the reaction 1-O-hexadecyl-sn-glycero-3-phosphocholine + H2O = 1-O-hexadecyl-sn-glycerol + phosphocholine + H(+). It participates in lipid metabolism; sphingolipid metabolism. Its activity is regulated as follows. Activated by arachidonic acid. Its function is as follows. Catalyzes, at least in vitro, the hydrolysis of sphingomyelin to form ceramide and phosphocholine. Also hydrolyzes 1-O-alkyl-2-lyso-sn-glycero-3-phosphocholine (lyso-platelet-activating factor) in vivo. Also acts on 1-acyl-2-lyso-sn-glycero-3-phosphocholine (lyso-PC) and sphingosylphosphocholine. This Mus musculus (Mouse) protein is Sphingomyelin phosphodiesterase 2.